The following is a 391-amino-acid chain: Chalcone synthase (391 aa).

The active site involves Cys-164.

The protein belongs to the thiolase-like superfamily. Chalcone/stilbene synthases family.

It carries out the reaction (E)-4-coumaroyl-CoA + 3 malonyl-CoA + 3 H(+) = 2',4,4',6'-tetrahydroxychalcone + 3 CO2 + 4 CoA. It functions in the pathway secondary metabolite biosynthesis; flavonoid biosynthesis. Its function is as follows. The primary product of this enzyme is 4,2',4',6'-tetrahydroxychalcone (also termed naringenin-chalcone or chalcone) which can under specific conditions spontaneously isomerize into naringenin. The protein is Chalcone synthase (CHS) of Dianthus caryophyllus (Carnation).